A 129-amino-acid polypeptide reads, in one-letter code: Fluoride-specific ion channel FluC 2 (129 aa).

Residues 19-39 (GLGLVVPAAAVGGFPLGTLFI) form a helical membrane-spanning segment. 2 residues coordinate Na(+): glycine 74 and threonine 77. The helical transmembrane segment at 95–115 (FGMAAVYIAASLFGGLLASWA) threads the bilayer.

It belongs to the fluoride channel Fluc/FEX (TC 1.A.43) family.

Its subcellular location is the cell membrane. It catalyses the reaction fluoride(in) = fluoride(out). With respect to regulation, na(+) is not transported, but it plays an essential structural role and its presence is essential for fluoride channel function. In terms of biological role, fluoride-specific ion channel. Important for reducing fluoride concentration in the cell, thus reducing its toxicity. The protein is Fluoride-specific ion channel FluC 2 of Geobacillus kaustophilus (strain HTA426).